Reading from the N-terminus, the 399-residue chain is Bifunctional enzyme IspD/IspF (399 aa).

A 2-C-methyl-D-erythritol 4-phosphate cytidylyltransferase region spans residues 1 to 239 (MHTWALLLAA…SSEKKNMQVP (239 aa)). Positions 240 to 399 (CVGWGYDVHR…AVTALRRVSS (160 aa)) are 2-C-methyl-D-erythritol 2,4-cyclodiphosphate synthase. 2 residues coordinate a divalent metal cation: Asp246 and His248. 4-CDP-2-C-methyl-D-erythritol 2-phosphate is bound by residues 246-248 (DVH) and 273-274 (HS). His281 is an a divalent metal cation binding site. 4-CDP-2-C-methyl-D-erythritol 2-phosphate is bound by residues 295–297 (DIG), 300–304 (FPDTD), 371–374 (TTEE), and Phe378.

It in the N-terminal section; belongs to the IspD/TarI cytidylyltransferase family. IspD subfamily. This sequence in the C-terminal section; belongs to the IspF family. Requires a divalent metal cation as cofactor.

The catalysed reaction is 2-C-methyl-D-erythritol 4-phosphate + CTP + H(+) = 4-CDP-2-C-methyl-D-erythritol + diphosphate. It catalyses the reaction 4-CDP-2-C-methyl-D-erythritol 2-phosphate = 2-C-methyl-D-erythritol 2,4-cyclic diphosphate + CMP. It participates in isoprenoid biosynthesis; isopentenyl diphosphate biosynthesis via DXP pathway; isopentenyl diphosphate from 1-deoxy-D-xylulose 5-phosphate: step 2/6. The protein operates within isoprenoid biosynthesis; isopentenyl diphosphate biosynthesis via DXP pathway; isopentenyl diphosphate from 1-deoxy-D-xylulose 5-phosphate: step 4/6. Its function is as follows. Bifunctional enzyme that catalyzes the formation of 4-diphosphocytidyl-2-C-methyl-D-erythritol from CTP and 2-C-methyl-D-erythritol 4-phosphate (MEP) (IspD), and catalyzes the conversion of 4-diphosphocytidyl-2-C-methyl-D-erythritol 2-phosphate (CDP-ME2P) to 2-C-methyl-D-erythritol 2,4-cyclodiphosphate (ME-CPP) with a corresponding release of cytidine 5-monophosphate (CMP) (IspF). This chain is Bifunctional enzyme IspD/IspF, found in Oleidesulfovibrio alaskensis (strain ATCC BAA-1058 / DSM 17464 / G20) (Desulfovibrio alaskensis).